Reading from the N-terminus, the 816-residue chain is Probable transcriptional regulator SLK2 (816 aa).

Disordered stretches follow at residues 133-153 (HDPSVQLGGSSATSLPTSQTN) and 166-189 (SFFQDPNNLTQARKKPRLDSKQDD). 2 stretches are compositionally biased toward polar residues: residues 139 to 153 (LGGSSATSLPTSQTN) and 166 to 176 (SFFQDPNNLTQ). The interval 307-554 (PSESSIVYWR…DQKVGPIEAL (248 aa)) is dimerization. The Nuclear localization signal signature appears at 316 to 330 (RKFVTEYFSPRAKKR). Composition is skewed to polar residues over residues 644–662 (IQQEPSRNRSASPSYQGTS) and 672–711 (PSISGVSSHLSPQRQMPSSSYNGSTQQYHQQPPSCSSGNQ). The tract at residues 644–711 (IQQEPSRNRS…QPPSCSSGNQ (68 aa)) is disordered.

It belongs to the adn1/SEU family. In terms of assembly, forms corepressor complexes with LUH; LUH is the transcription repressor subunit and SLK2 the specific DNA-binding adapters. In terms of tissue distribution, expressed in young flower meristems, ovules and the carpel margin meristem.

It is found in the nucleus. Probable transcription regulator that functions in the development of the carpel margin meristem similarly to SEUSS (SEU). In association with SEU, supports organ development from meristematic regions by facilitating auxin response and thus organ initiation, and by sustaining meristematic potential through the maintenance of PHABULOSA expression. DNA-binding adapter subunit of the SEU-SLK2 transcriptional corepressor of abiotic stress (e.g. salt and osmotic stress) response genes. The chain is Probable transcriptional regulator SLK2 (SLK2) from Arabidopsis thaliana (Mouse-ear cress).